Here is a 137-residue protein sequence, read N- to C-terminus: Large ribosomal subunit protein uL16 (137 aa).

It belongs to the universal ribosomal protein uL16 family. In terms of assembly, part of the 50S ribosomal subunit.

Its function is as follows. Binds 23S rRNA and is also seen to make contacts with the A and possibly P site tRNAs. This is Large ribosomal subunit protein uL16 from Chlamydia abortus (strain DSM 27085 / S26/3) (Chlamydophila abortus).